The sequence spans 209 residues: Transmembrane emp24 domain-containing protein B (209 aa).

A signal peptide spans methionine 1–alanine 24. Over leucine 25 to arginine 174 the chain is Lumenal. Residues glutamine 34–serine 119 form the GOLD domain. Residues valine 175 to tryptophan 195 form a helical membrane-spanning segment. Residues tyrosine 196–valine 209 lie on the Cytoplasmic side of the membrane.

Belongs to the EMP24/GP25L family.

Its subcellular location is the cytoplasmic vesicle membrane. In terms of biological role, could have a role in the budding of coatomer-coated and other species of coated vesicles. This is Transmembrane emp24 domain-containing protein B (empB) from Dictyostelium discoideum (Social amoeba).